The chain runs to 155 residues: Myosin light chain alkali (155 aa).

2 consecutive EF-hand domains span residues 7–41 (REVENVEFVFEVMGSPGEGIDAFDLGDALRALNLN) and 80–115 (GCYEDFIECLKLYDKEENGTMLLAELQHALLALGES).

In terms of assembly, myosin is a hexamer of 2 heavy chains and 4 light chains.

The polypeptide is Myosin light chain alkali (Mlc1) (Drosophila virilis (Fruit fly)).